Reading from the N-terminus, the 1334-residue chain is Rho1 guanine nucleotide exchange factor 1 (1334 aa).

Disordered stretches follow at residues 1-89 (MDYR…ASPV), 135-182 (PQVS…SDSV), 203-245 (LDQN…TSGT), and 381-402 (SLIN…ASSP). The segment covering 138–149 (SNHAPNNSNSPS) has biased composition (low complexity). Positions 150-164 (LTWHTSSGDDSNQNP) are enriched in polar residues. Over residues 170 to 180 (QSQSSTSPVSD) the composition is skewed to low complexity. Composition is skewed to polar residues over residues 213–227 (VRSS…NSRL), 234–245 (HTVGSHSFTSGT), and 381–400 (SLIN…SEAS). Phosphoserine is present on serine 381. The DH domain occupies 621–808 (KRQEVICEVI…RGFLSRLNVE (188 aa)). The PH domain maps to 843–973 (QLIFKGPLKK…WLEHIDNQQT (131 aa)). The CNH domain occupies 995–1293 (DNKVNAIGVY…RLLADGRGKL (299 aa)).

Its subcellular location is the cytoplasm. In terms of biological role, stimulates the exchange of Rho1 and Rho5 GDP-bound form into GTP-bound form. Controls septum formation, cell wall synthesis and localization of F-actin patches. Coordinates actin deposition with cell wall biosynthesis during bipolar growth. The chain is Rho1 guanine nucleotide exchange factor 1 (rgf1) from Schizosaccharomyces pombe (strain 972 / ATCC 24843) (Fission yeast).